Reading from the N-terminus, the 1749-residue chain is Kinase non-catalytic C-lobe domain-containing protein 1 (1749 aa).

In terms of domain architecture, KIND 1 spans 37–217 (VSLADILSLR…QDVSESSWRE (181 aa)). Disordered regions lie at residues 210–275 (VSES…SHSR) and 361–435 (CRLW…ARQL). Composition is skewed to basic and acidic residues over residues 363 to 373 (LWPEQEPEHQL) and 410 to 430 (ADPR…RIPE). Residues 444-608 (VSLQDLLSQL…RASICQVYQE (165 aa)) enclose the KIND 2 domain. Disordered regions lie at residues 689 to 871 (ARDQ…RPAD) and 962 to 1061 (QASP…GGAS). Positions 702-717 (ERGGQREGEGEEKLSL) are enriched in basic and acidic residues. Low complexity-rich tracts occupy residues 739–748 (QGAAPEPLGA) and 766–779 (PANQ…AAPG). The segment covering 823-833 (HGPRHPPKPPR) has biased composition (basic residues). Over residues 853–871 (GERDDQSPDSVPERPRPAD) the composition is skewed to basic and acidic residues. A Phosphoserine modification is found at S964. Positions 980-990 (SQSPRSPSSKR) are enriched in low complexity. Positions 1005 to 1019 (RTSSRAPCSPTSVSD) are enriched in polar residues. Positions 1040 to 1056 (VKAERAQQPEAGEDRRP) are enriched in basic and acidic residues. Positions 1133-1190 (QQLMMEKRNYRKTLKFYQKLLQKEKRNKGSDVKTMLSKLKGQLEEMKSRVQFLSLVKK) form a coiled coil. Positions 1246-1371 (KARILQAGTP…HLLGLLEVGM (126 aa)) constitute an N-terminal Ras-GEF domain. Residues 1468 to 1719 (STHQLFSQLT…SGADISTLAA (252 aa)) form the Ras-GEF domain.

Interacts (via KIND2) with MAP2; the interaction enhances MAP2 phosphorylation and localizes KNDC1 to dendrites. Expressed specifically in the cerebral cortex.

The protein resides in the cell projection. It localises to the dendrite. The protein localises to the perikaryon. In terms of biological role, RAS-Guanine nucleotide exchange factor (GEF) that controls the negative regulation of neuronal dendrite growth by mediating a signaling pathway linking RAS and MAP2. May be involved in cellular senescence. The chain is Kinase non-catalytic C-lobe domain-containing protein 1 from Homo sapiens (Human).